The sequence spans 331 residues: MLIKTDRWLRGDDIPASEITPQHLFDQRRRLLAAAALGAAGAALSPWAARRAFAASPAPAWLAAKPNPAYATVEKPTPFDEVTTYNNFYEFGTDKSDPARYAGTLRPHPWQVSVEGLVKAPKTYDLDDLMKMAPMEERIYRLRCVEGWSMVIPWVGFPLAELIRRVEPQGSARYIQFISLADKRQMPGVSSPVLDWPYSEGLRMDEAMHPLVLLTFGLYGQVLPNQNGAPVRVIVPWKYGFKSAKSIVRIRFVDKQPPTSWNIAAPNEYGFYSNVNPSVDHPRWSQATERRIGEDKGGFGGLFAPKRKTLMFNGYDQVASLYTGMDLRKFF.

Positions 1–54 (MLIKTDRWLRGDDIPASEITPQHLFDQRRRLLAAAALGAAGAALSPWAARRAFA) form a signal peptide, tat-type signal. Mo-molybdopterin contacts are provided by residues Asn-86, 89-90 (YE), Cys-144, Ser-179, Asn-227, Arg-232, and 243-245 (SAK).

It belongs to the MsrP family. Heterodimer of a catalytic subunit (MsrP) and a heme-binding subunit (MsrQ). It depends on Mo-molybdopterin as a cofactor. In terms of processing, predicted to be exported by the Tat system. The position of the signal peptide cleavage has not been experimentally proven.

The protein localises to the periplasm. It carries out the reaction L-methionyl-[protein] + a quinone + H2O = L-methionyl-(S)-S-oxide-[protein] + a quinol. The catalysed reaction is L-methionyl-[protein] + a quinone + H2O = L-methionyl-(R)-S-oxide-[protein] + a quinol. Functionally, part of the MsrPQ system that repairs oxidized periplasmic proteins containing methionine sulfoxide residues (Met-O), using respiratory chain electrons. Thus protects these proteins from oxidative-stress damage caused by reactive species of oxygen and chlorine generated by the host defense mechanisms. MsrPQ is essential for the maintenance of envelope integrity under bleach stress, rescuing a wide series of structurally unrelated periplasmic proteins from methionine oxidation. The catalytic subunit MsrP is non-stereospecific, being able to reduce both (R-) and (S-) diastereoisomers of methionine sulfoxide. This is Protein-methionine-sulfoxide reductase catalytic subunit MsrP from Ralstonia nicotianae (strain ATCC BAA-1114 / GMI1000) (Ralstonia solanacearum).